A 579-amino-acid chain; its full sequence is Extracellular serine/threonine protein kinase FAM20C (579 aa).

Over Met-1–Arg-10 the chain is Cytoplasmic. A propeptide spanning residues Met-1–Gln-87 is cleaved from the precursor. Residues Val-11 to Pro-31 form a helical; Signal-anchor for type II membrane protein membrane-spanning segment. Over Lys-32 to Arg-579 the chain is Lumenal. The interval Thr-38–Asn-79 is disordered. The span at Ala-49–Ala-63 shows a compositional bias: low complexity. Asn-96 carries an N-linked (GlcNAc...) asparagine glycan. The disordered stretch occupies residues Lys-104–Leu-155. Basic and acidic residues-rich tracts occupy residues Pro-111–Glu-120 and Asp-128–Pro-140. Residues Gln-264, Lys-280, and Glu-301 each contribute to the ATP site. Residue Glu-301 coordinates Mn(2+). Residues Phe-349–Gly-560 are kinase domain. 2 disulfide bridges follow: Cys-357–Cys-373 and Cys-362–Cys-366. Residue Ala-384–Leu-387 participates in ATP binding. Disulfide bonds link Cys-421–Cys-495 and Cys-496–Cys-555. Asp-453 is an active-site residue. ATP contacts are provided by Glu-458 and Asp-473. Asp-473 contributes to the Mn(2+) binding site.

The protein belongs to the FAM20 family. As to quaternary structure, homodimer; disulfide-linked. Interacts with FAM20A; probably forming a heterotetramer of 2 subunits of FAM20A and 2 subunits of FAM20C. Interacts with COPII components SEC23A and SEC24A; transport of FAM20C from the endoplasmic reticulum to the Golgi is likely to be mediated by COPII vesicles. The cofactor is Mn(2+). N-glycosylation is required for folding. In terms of processing, autophosphorylated. Post-translationally, propeptide cleavage by MBTPS1/S1P promotes FAM20C secretion and maximal kinase activity which is essential for efficient osteoblast differentiation and biomineralization. In terms of tissue distribution, in the mammary gland, expressed at higher levels in lactating mice than in virgin mice (at protein level). Highly expressed in the tooth. No expression in the dental pulp. At the secretory stage of amelogenesis, it is detected in the matrix of the enamel, in the ameloblasts, and within the cells adjoining the stratum intermedium (a tissue layer analogous to the stellate reticulum seen in the developing molar). Strong expression is observed in maturation stage ameloblasts and throughout the non-cornified layers of the gingival epithelium. Expressed at moderate levels in bone and at low levels in kidney, liver, brain and lung. Very low expression, if any, in spleen and skeletal muscle.

Its subcellular location is the golgi apparatus membrane. It localises to the secreted. The protein localises to the endoplasmic reticulum. It catalyses the reaction L-seryl-[protein] + ATP = O-phospho-L-seryl-[protein] + ADP + H(+). The catalysed reaction is L-threonyl-[protein] + ATP = O-phospho-L-threonyl-[protein] + ADP + H(+). Its activity is regulated as follows. Serine/threonine protein kinase activity is increased upon interaction with FAM20A. Functionally, golgi serine/threonine protein kinase that phosphorylates secretory pathway proteins within Ser-x-Glu/pSer motifs and plays a key role in biomineralization of bones and teeth. Constitutes the main protein kinase for extracellular proteins, generating the majority of the extracellular phosphoproteome. Mainly phosphorylates proteins within the Ser-x-Glu/pSer motif, but also displays a broader substrate specificity. Phosphorylates ERO1A, enhancing its activity which is required to maintain endoplasmic reticulum redox homeostasis and for oxidative protein folding. During endoplasmic reticulum stress, phosphorylates P4HB/PDIA1 which induces a functional switch, causing P4HB to change from an oxidoreductase to a molecular chaperone. This is critical to maintain ER proteostasis and reduce cell death under ER stress. Phosphorylation of P4HB also promotes its interaction with ERN1, leading to reduced activity of ERN1, a key sensor for the endoplasmic reticulum unfolded protein response. Required for osteoblast differentiation and mineralization. Phosphorylates casein as well as a number of proteins involved in biomineralization such as AMELX, AMTN, ENAM and SPP1. In addition to its role in biomineralization, also plays a role in lipid homeostasis, wound healing and cell migration and adhesion. The protein is Extracellular serine/threonine protein kinase FAM20C of Mus musculus (Mouse).